Here is a 151-residue protein sequence, read N- to C-terminus: Large ribosomal subunit protein bL9 (151 aa).

It belongs to the bacterial ribosomal protein bL9 family.

Binds to the 23S rRNA. The protein is Large ribosomal subunit protein bL9 of Prochlorococcus marinus (strain MIT 9301).